Reading from the N-terminus, the 312-residue chain is Malate dehydrogenase (312 aa).

NAD(+) contacts are provided by residues 7–13 (GAAGGIG) and Asp-34. Residues Arg-81 and Arg-87 each coordinate substrate. NAD(+) contacts are provided by residues Asn-94 and 117 to 119 (ITN). The substrate site is built by Asn-119 and Arg-153. The active-site Proton acceptor is His-177. Residue Met-227 coordinates NAD(+).

Belongs to the LDH/MDH superfamily. MDH type 1 family. As to quaternary structure, homodimer.

The catalysed reaction is (S)-malate + NAD(+) = oxaloacetate + NADH + H(+). Functionally, catalyzes the reversible oxidation of malate to oxaloacetate. The polypeptide is Malate dehydrogenase (Yersinia pseudotuberculosis serotype O:1b (strain IP 31758)).